The following is a 699-amino-acid chain: Elongation factor G (699 aa).

One can recognise a tr-type G domain in the interval E8–T289. Residues A17 to T24, D88 to H92, and N142 to D145 contribute to the GTP site.

Belongs to the TRAFAC class translation factor GTPase superfamily. Classic translation factor GTPase family. EF-G/EF-2 subfamily.

It is found in the cytoplasm. Its function is as follows. Catalyzes the GTP-dependent ribosomal translocation step during translation elongation. During this step, the ribosome changes from the pre-translocational (PRE) to the post-translocational (POST) state as the newly formed A-site-bound peptidyl-tRNA and P-site-bound deacylated tRNA move to the P and E sites, respectively. Catalyzes the coordinated movement of the two tRNA molecules, the mRNA and conformational changes in the ribosome. This Variovorax paradoxus (strain S110) protein is Elongation factor G.